The following is a 232-amino-acid chain: Orotate phosphoribosyltransferase (232 aa).

5-phospho-alpha-D-ribose 1-diphosphate contacts are provided by residues arginine 107, lysine 108, lysine 111, histidine 113, and 133 to 141; that span reads EDLTTAGGS. Threonine 137 contacts orotate.

The protein belongs to the purine/pyrimidine phosphoribosyltransferase family. PyrE subfamily. As to quaternary structure, homodimer. Requires Mg(2+) as cofactor.

It catalyses the reaction orotidine 5'-phosphate + diphosphate = orotate + 5-phospho-alpha-D-ribose 1-diphosphate. Its pathway is pyrimidine metabolism; UMP biosynthesis via de novo pathway; UMP from orotate: step 1/2. Catalyzes the transfer of a ribosyl phosphate group from 5-phosphoribose 1-diphosphate to orotate, leading to the formation of orotidine monophosphate (OMP). This Rhizobium meliloti (strain 1021) (Ensifer meliloti) protein is Orotate phosphoribosyltransferase.